A 397-amino-acid chain; its full sequence is Tryptophan synthase beta chain (397 aa).

N6-(pyridoxal phosphate)lysine is present on lysine 86.

This sequence belongs to the TrpB family. Tetramer of two alpha and two beta chains. The cofactor is pyridoxal 5'-phosphate.

It catalyses the reaction (1S,2R)-1-C-(indol-3-yl)glycerol 3-phosphate + L-serine = D-glyceraldehyde 3-phosphate + L-tryptophan + H2O. Its pathway is amino-acid biosynthesis; L-tryptophan biosynthesis; L-tryptophan from chorismate: step 5/5. The beta subunit is responsible for the synthesis of L-tryptophan from indole and L-serine. The protein is Tryptophan synthase beta chain of Tolumonas auensis (strain DSM 9187 / NBRC 110442 / TA 4).